The sequence spans 309 residues: Histidine protein methyltransferase 1 homolog (309 aa).

Disordered stretches follow at residues 1–37 and 79–111; these read MSFK…FDSS and KPFK…NNKD. The span at 25 to 37 shows a compositional bias: basic and acidic residues; the sequence is EESKLDISEFDSS. The segment covering 84–109 has biased composition (low complexity); sequence NQDNNNDNNVNSNDKNDNNNNNNNNN. Residues 132–136, Gly159, 179–181, 209–211, and Ser229 contribute to the S-adenosyl-L-methionine site; these read LWECS, QDY, and GDW.

The protein belongs to the methyltransferase superfamily. METTL18 family.

The protein resides in the cytoplasm. The protein localises to the cytosol. It localises to the nucleus. Its subcellular location is the nucleolus. It carries out the reaction L-histidyl-[protein] + S-adenosyl-L-methionine = N(tele)-methyl-L-histidyl-[protein] + S-adenosyl-L-homocysteine + H(+). Its function is as follows. Protein-L-histidine N-tele-methyltransferase that probably monomethylates RPL3. Through the methylation of RPL3 may regulate the dynamics of pre-rRNA processing, ribosome biogenesis, and translation. The protein is Histidine protein methyltransferase 1 homolog of Dictyostelium discoideum (Social amoeba).